A 291-amino-acid chain; its full sequence is Ajmaline N-methyltransferase (291 aa).

The interval 71 to 80 (MLDVGCGIGG) is SAM motif I. The Vacuolar targeting signal signature appears at 133 to 139 (DGAFDLV). The segment at 134 to 142 (GAFDLVLSI) is SAM motif II. The tract at residues 161–170 (VAASGATIII) is SAM motif III.

This sequence belongs to the class I-like SAM-binding methyltransferase superfamily. gTMT family. As to quaternary structure, homodimer. Mainly expressed in roots, but barely detectable in stems and flowers.

It is found in the vacuole membrane. It catalyses the reaction ajmaline + S-adenosyl-L-methionine = 4-methylajmaline + S-adenosyl-L-homocysteine + H(+). The enzyme catalyses norajmaline + S-adenosyl-L-methionine = 4-methylnorajmaline + S-adenosyl-L-homocysteine + H(+). Its pathway is alkaloid biosynthesis; ajmaline biosynthesis. Its function is as follows. N-methyltransferase involved in the biosynthesis of ajmaline-type monoterpenoid indole alkaloids (MIAs) natural products, important plant-derived pharmaceuticals used in the therapy of heart disorders. Catalyzes the indole N-methylation of ajmaline to produce 4-methylajmaline. Also able, with a lower efficiency, to mediates the conversion of norajmaline to 4-methylnorajmaline. The chain is Ajmaline N-methyltransferase from Rauvolfia serpentina (Serpentine wood).